The following is a 336-amino-acid chain: MYYPFVRKALFQLDPERAHEFTFQQLRRITGTPFEALVRQKVPAKPVNCMGLTFKNPLGLAAGLDKDGECIDALGAMGFGSIEIGTVTPRPQPGNDKPRLFRLVDAEGLINRMGFNNLGVDNLVENVKKAHYDGVLGINIGKNKDTPVEQGKDDYLICMEKIYAYAGYIAINISSPNTPGLRTLQYGEALDDLLTAIKNKQNDLQAMHHKYVPIAVKIAPDLSEEELIQVADSLVRHNIDGVIATNTTLDRSLVQGMKNCDQTGGLSGRPLQLKSTEIIRRLSLELNGRLPIIGVGGIDSVIAAREKIAAGASLVQIYSGFIFKGPPLIKEIVTHI.

FMN contacts are provided by residues 62–66 (AGLDK) and threonine 86. Lysine 66 contacts substrate. 111-115 (NRMGF) contributes to the substrate binding site. FMN is bound by residues asparagine 139 and asparagine 172. Asparagine 172 serves as a coordination point for substrate. Serine 175 acts as the Nucleophile in catalysis. Asparagine 177 serves as a coordination point for substrate. 2 residues coordinate FMN: lysine 217 and threonine 245. Residue 246 to 247 (NT) participates in substrate binding. FMN-binding positions include glycine 268, glycine 297, and 318-319 (YS).

Belongs to the dihydroorotate dehydrogenase family. Type 2 subfamily. Monomer. Requires FMN as cofactor.

The protein localises to the cell membrane. It catalyses the reaction (S)-dihydroorotate + a quinone = orotate + a quinol. Its pathway is pyrimidine metabolism; UMP biosynthesis via de novo pathway; orotate from (S)-dihydroorotate (quinone route): step 1/1. Functionally, catalyzes the conversion of dihydroorotate to orotate with quinone as electron acceptor. This is Dihydroorotate dehydrogenase (quinone) from Escherichia coli (strain SE11).